A 1004-amino-acid chain; its full sequence is Importin subunit beta-5 (1004 aa).

Met1 bears the N-acetylmethionine mark. Positions 21 to 100 (AETQLLQWCD…REVLLKLCLN (80 aa)) constitute an Importin N-terminal domain.

Belongs to the importin beta family. In terms of assembly, interacts with NAP1.

It is found in the cytoplasm. The protein localises to the nucleus. The protein resides in the nuclear pore complex. Its function is as follows. Required for nuclear protein import and mediates docking of import substrate to distinct nucleoporins. Serves a receptor for nuclear localization signals. Mediates the nuclear import of TATA-binding protein (TBP) and of histones H2A and H2B. This is Importin subunit beta-5 (KAP114) from Saccharomyces cerevisiae (strain ATCC 204508 / S288c) (Baker's yeast).